Here is a 272-residue protein sequence, read N- to C-terminus: 5'-nucleotidase SurE (272 aa).

Asp8, Asp9, Ser39, and Asn96 together coordinate a divalent metal cation.

Belongs to the SurE nucleotidase family. The cofactor is a divalent metal cation.

Its subcellular location is the cytoplasm. It carries out the reaction a ribonucleoside 5'-phosphate + H2O = a ribonucleoside + phosphate. Nucleotidase that shows phosphatase activity on nucleoside 5'-monophosphates. This chain is 5'-nucleotidase SurE, found in Heliobacterium modesticaldum (strain ATCC 51547 / Ice1).